The following is a 180-amino-acid chain: Formate hydrogenlyase subunit 6 (180 aa).

4Fe-4S ferredoxin-type domains follow at residues 31–60 and 66–95; these read GKPE…VETD and LAWE…LSQE. Residues C40, C43, C46, C50, C75, C78, C81, and C85 each coordinate [4Fe-4S] cluster.

In terms of assembly, FHL comprises of a formate dehydrogenase, unidentified electron carriers and a hydrogenase (isoenzyme 3). In this non-energy conserving pathway, molecular hydrogen and carbodioxide are released from formate.

Its function is as follows. Probable electron transfer protein for hydrogenase 3. The polypeptide is Formate hydrogenlyase subunit 6 (hycF) (Escherichia coli (strain K12)).